We begin with the raw amino-acid sequence, 163 residues long: Nucleotide-binding protein BA_1166 (163 aa).

This sequence belongs to the YajQ family.

Functionally, nucleotide-binding protein. This chain is Nucleotide-binding protein BA_1166, found in Bacillus anthracis.